A 1828-amino-acid chain; its full sequence is Unconventional myosin-Va (1828 aa).

N-acetylalanine is present on A2. Positions 8–60 constitute a Myosin N-terminal SH3-like domain; sequence TKFARVWIPDPEEVWKSAELLKDYKPGDKVLLLHLEEGKDLEYRLDPKTSELP. One can recognise a Myosin motor domain in the interval 69 to 763; sequence VGENDLTALS…QVAYLEKLRA (695 aa). ATP is bound at residue 163–170; sequence GESGAGKT. Residues 599–633 are disordered; sequence ISPTSATSSGRTPLTRVPVKPTKGRPGQTAKEHKK. Residue S600 is modified to Phosphoserine. The span at 600 to 610 shows a compositional bias: polar residues; the sequence is SPTSATSSGRT. Positions 643–665 are actin-binding; sequence LHLLMETLNATTPHYVRCIKPND. 6 IQ domains span residues 766-788, 789-813, 814-836, 837-861, 862-884, and 885-914; these read LRAA…RYLC, MQRA…KFLR, RTKA…KYKI, RRAA…RKIL, REHK…HYKR, and TMKA…EARS. 2 coiled-coil regions span residues 914-1239 and 1314-1418; these read SVER…EVNA and GLKE…ELEV. T1032 is modified (phosphothreonine). Positions 1105 to 1147 are disordered; that stretch reads VPKPGHKRTDSTHSSNESEYTFSSEFAETEDIAPRTEEPTEKK. Residues 1116–1130 show a composition bias toward polar residues; the sequence is THSSNESEYTFSSEF. The span at 1136-1147 shows a compositional bias: basic and acidic residues; that stretch reads IAPRTEEPTEKK. Phosphoserine occurs at positions 1425 and 1625. The region spanning 1507 to 1783 is the Dilute domain; the sequence is TSTINSIKKV…IRTIQVRLRD (277 aa). T1733 carries the phosphothreonine modification.

Belongs to the TRAFAC class myosin-kinesin ATPase superfamily. Myosin family. May be a homodimer, which associates with multiple calmodulin or myosin light chains. Interacts with RIPL2, the interaction is required for its role in dendrite formation. Interacts with MLPH. Interacts with SYTL4. Interacts with MYRIP. Interacts with RAB10; mediates the transport to the plasma membrane of SLC2A4/GLUT4 storage vesicles. Interacts with FMR1; this interaction occurs in association with polyribosome.

The catalysed reaction is ATP + H2O = ADP + phosphate + H(+). Its function is as follows. Processive actin-based motor that can move in large steps approximating the 36-nm pseudo-repeat of the actin filament. Can hydrolyze ATP in the presence of actin, which is essential for its function as a motor protein. Involved in melanosome transport. Also mediates the transport of vesicles to the plasma membrane. May also be required for some polarization process involved in dendrite formation. The chain is Unconventional myosin-Va (Myo5a) from Rattus norvegicus (Rat).